The sequence spans 817 residues: Phosphoenolpyruvate synthase (817 aa).

His-442 functions as the Tele-phosphohistidine intermediate in the catalytic mechanism. Residues Arg-540, Arg-587, Glu-684, Gly-706, Thr-707, Asn-708, and Asp-709 each contribute to the substrate site. Mg(2+) is bound at residue Glu-684. Asp-709 is a Mg(2+) binding site. Cys-756 acts as the Proton donor in catalysis.

The protein belongs to the PEP-utilizing enzyme family. As to quaternary structure, homooctamer. The cofactor is Mg(2+).

The catalysed reaction is pyruvate + ATP + H2O = phosphoenolpyruvate + AMP + phosphate + 2 H(+). Its pathway is carbohydrate biosynthesis; gluconeogenesis. Catalyzes the phosphorylation of pyruvate to phosphoenolpyruvate. The protein is Phosphoenolpyruvate synthase (ppsA) of Pyrococcus furiosus (strain ATCC 43587 / DSM 3638 / JCM 8422 / Vc1).